Consider the following 518-residue polypeptide: MDESRRQRPAGHVAANLSPQGARQRSFKDWLASYVHSNPHGASGRPSGPSLQDAAVSRSSHGSRHRSGLRERLRAGLSRWRMSRSSHRRASPETPGTAAKLNRPPLRRSQAALTAPPSSPSHILTLTRIRKLCSPVFAINPALHYTTLEIPGARSFGGSGGYGDVQLIREHKLAVKTIKEKEWFAVELIATLLVGECVLRAGRTHNIRGFIAPLGFSLQQRQIVFPAYDMDLGKYIGQLASLRTTNPSVSTALHQCFTELARAVVFLNTTCGISHLDIKCANILVMLRSDAVSLRRAVLADFSLVTLNSNSTIARGQFCLQEPDLKSPRMFGMPTALTTANFHTLVGHGYNQPPELLVKYLNNERAEFTNHRLKHDVGLAVDLYALGQTLLELVVSVYVAPSLGVPVTRFPGYQYFNNQLSPDFALALLAYRCVLHPALFVNSAETNTHGLAYDVPEGIRRHLRNPKIRRAFTDRCINYQHTHKAILSSVALPPELKPLLVLVSRLCHTNPCARHALS.

Positions 1–119 (MDESRRQRPA…QAALTAPPSS (119 aa)) are disordered. The Protein kinase domain maps to 151-518 (PGARSFGGSG…TNPCARHALS (368 aa)). Residues 157 to 165 (GGSGGYGDV) and K176 contribute to the ATP site. D277 functions as the Proton acceptor in the catalytic mechanism.

The protein belongs to the protein kinase superfamily. Ser/Thr protein kinase family. Post-translationally, autophosphorylated.

The protein resides in the virion tegument. It is found in the host nucleus. It carries out the reaction L-seryl-[protein] + ATP = O-phospho-L-seryl-[protein] + ADP + H(+). The catalysed reaction is L-threonyl-[protein] + ATP = O-phospho-L-threonyl-[protein] + ADP + H(+). Functionally, multifunctional serine/threonine kinase that plays a role in several processes including egress of virus particles from the nucleus, modulation of the actin cytoskeleton and regulation of viral and cellular gene expression. Regulates the nuclear localization of viral envelopment factors UL34 and UL31, by phosphorylating the US3 kinase, indicating a role in nuclear egress. Disrupts host nuclear lamins, including LMNA and LMNB1. Phosphorylates the viral Fc receptor composed of glycoproteins E (gE) and I (gI). Phosphorylation of glycoprotein E (gE) by UL13 alters its subcellular localization, from the host early endosome to the plasma membrane. Participates in the transcriptional regulation of cellular and viral mRNAs mainly by phosphorylating the viral transcriptional regulator ICP22. Additional substrates have been identified, including UL41, UL49 or host EF1D. The polypeptide is Serine/threonine-protein kinase UL13 (Homo sapiens (Human)).